We begin with the raw amino-acid sequence, 396 residues long: L-lactate dehydrogenase (396 aa).

The region spanning Met1–Gly380 is the FMN hydroxy acid dehydrogenase domain. Position 24 (Tyr24) interacts with substrate. The FMN site is built by Ser106 and Gln127. Residue Tyr129 coordinates substrate. FMN is bound at residue Thr155. Arg164 contributes to the substrate binding site. Lys251 lines the FMN pocket. His275 serves as the catalytic Proton acceptor. Arg278 contributes to the substrate binding site. Asp306–Arg330 contributes to the FMN binding site.

It belongs to the FMN-dependent alpha-hydroxy acid dehydrogenase family. FMN is required as a cofactor.

The protein resides in the cell inner membrane. It catalyses the reaction (S)-lactate + A = pyruvate + AH2. In terms of biological role, catalyzes the conversion of L-lactate to pyruvate. Is coupled to the respiratory chain. The protein is L-lactate dehydrogenase of Escherichia coli O45:K1 (strain S88 / ExPEC).